The sequence spans 394 residues: Ketoisovalerate oxidoreductase subunit VorA (394 aa).

As to quaternary structure, heterotetramer of one alpha, one beta, one delta and one gamma chain.

It carries out the reaction 3-methyl-2-oxobutanoate + 2 oxidized [2Fe-2S]-[ferredoxin] + CoA = 2-methylpropanoyl-CoA + 2 reduced [2Fe-2S]-[ferredoxin] + CO2 + H(+). This chain is Ketoisovalerate oxidoreductase subunit VorA (vorA), found in Pyrococcus furiosus (strain ATCC 43587 / DSM 3638 / JCM 8422 / Vc1).